We begin with the raw amino-acid sequence, 330 residues long: Transcription factor zip1 (330 aa).

A compositionally biased stretch (basic and acidic residues) spans 133-148 (SKETQEKTSSQRELFE). Disordered regions lie at residues 133–165 (SKETQEKTSSQRELFEQKSSVASASKDNVSSSS) and 238–277 (PSLSSYKGAQSPNANSKRTKATSAIRTAAEEDKRRRNTAA). Positions 150–165 (KSSVASASKDNVSSSS) are enriched in low complexity. Over residues 244 to 262 (KGAQSPNANSKRTKATSAI) the composition is skewed to polar residues. Residues 264–327 (TAAEEDKRRR…NWLKGLIRPT (64 aa)) enclose the bZIP domain. The basic motif stretch occupies residues 270 to 288 (KRRRNTAASARFRIKKKLK). The leucine-zipper stretch occupies residues 292 to 320 (LERTAKELTEKVAILETRVRELEMENNWL).

Belongs to the bZIP family. Interacts with pof1.

It localises to the nucleus. Mediates cell growth arrest in response to cadmium exposure, which is essential to maintain cell viability. Regulates cadmium stress specific genes. The protein is Transcription factor zip1 (zip1) of Schizosaccharomyces pombe (strain 972 / ATCC 24843) (Fission yeast).